The primary structure comprises 178 residues: Fatty-acid and retinol-binding protein 1 (178 aa).

The first 16 residues, M1–A16, serve as a signal peptide directing secretion. N-linked (GlcNAc...) asparagine glycosylation is found at N44 and N75. Coiled coils occupy residues D67–N89 and K123–T154. N-linked (GlcNAc...) asparagine glycosylation is present at N157.

It belongs to the fatty-acid and retinol-binding protein (FARBP) family. N-glycosylated.

The protein localises to the secreted. Binds retinol and different fatty acids. This Onchocerca gutturosa protein is Fatty-acid and retinol-binding protein 1.